The sequence spans 82 residues: Cobrotoxin-b (82 aa).

The signal sequence occupies residues 1–21 (MKTLLLTLLVVTIVCLDLGYT). Intrachain disulfides connect C24–C44, C38–C61, C63–C74, and C75–C80.

This sequence belongs to the three-finger toxin family. Short-chain subfamily. Type I alpha-neurotoxin sub-subfamily. In terms of tissue distribution, expressed by the venom gland.

The protein resides in the secreted. Functionally, binds to muscle nicotinic acetylcholine receptor (nAChR) and inhibit acetylcholine from binding to the receptor, thereby impairing neuromuscular transmission. Produces peripheral paralysis by blocking neuromuscular transmission at the postsynaptic site. Has a lower toxicity than cobrotoxin. The polypeptide is Cobrotoxin-b (Naja atra (Chinese cobra)).